Consider the following 253-residue polypeptide: Acidic 26 kDa endochitinase (253 aa).

An N-terminal signal peptide occupies residues 1–24; that stretch reads MKFNIVSPVALSCLFFLFLTGTLA. The active-site Proton donor is the Glu92. Cysteines 212 and 244 form a disulfide.

This sequence belongs to the glycosyl hydrolase 19 family. Chitinase class II subfamily.

The protein localises to the secreted. It localises to the extracellular space. The catalysed reaction is Random endo-hydrolysis of N-acetyl-beta-D-glucosaminide (1-&gt;4)-beta-linkages in chitin and chitodextrins.. In terms of biological role, defense against chitin-containing fungal pathogens. This Solanum lycopersicum (Tomato) protein is Acidic 26 kDa endochitinase (CHI3).